Here is a 736-residue protein sequence, read N- to C-terminus: MEALIPVINKLQDVFNTVGADIIQLPQIVVVGTQSSGKSSVLESLVGRDLLPRGTGVVTRRPLILQLVHVSPEDKRKTTGEENGVEAEEWGKFLHTKNKLYTDFDEIRQEIENETERISGNNKGVSPEPIHLKVFSPNVVNLTLVDLPGMTKVPVGDQPKDIELQIRELILRFISNPNSIILAVTAANTDMATSEALKISREVDPDGRRTLAVITKLDLMDAGTDAMDVLMGRVIPVKLGIIGVVNRSQLDINNKKSVTDSIRDEYAFLQKKYPSLANRNGTKYLARTLNRLLMHHIRDCLPELKTRINVLAAQYQSLLNSYGEPVDDKSATLLQLITKFATEYCNTIEGTAKYIETSELCGGARICYIFHETFGRTLESVDPLGGLNTIDILTAIRNATGPRPALFVPEVSFELLVKRQIKRLEEPSLRCVELVHEEMQRIIQHCSNYSTQELLRFPKLHDAIVEVVTCLLRKRLPVTNEMVHNLVAIELAYINTKHPDFADACGLMNNNIEEQRRNRLARELPSAGSRDKSSKVPSALAPASQEPPPAASAEADGKLIQDNRRETKNVPSAGGGIGDGGQEPTTGNWRGMLKTSKAEELLAEEKSKPIPIMPASPQKGHAVNLLDVPVPVARKLSAREQRDCEVIERLIKSYFLIVRKNIQDSVPKAVMHFLVNHVKDTLQSELVGQLYKSSLLDDLLTESEDMAQRRKEAADMLKALQGASQIIAEIRETHLW.

M1 bears the N-acetylmethionine mark. Residues 22-302 (IIQLPQIVVV…LMHHIRDCLP (281 aa)) enclose the Dynamin-type G domain. Positions 32-39 (GTQSSGKS) are G1 motif. 32 to 40 (GTQSSGKSS) serves as a coordination point for GTP. The G2 motif stretch occupies residues 58-60 (VTR). A G3 motif region spans residues 146–149 (DLPG). A G4 motif region spans residues 215 to 218 (TKLD). Residues 215–221 (TKLDLMD) and 246–249 (NRSQ) each bind GTP. The tract at residues 245–248 (VNRS) is G5 motif. The segment at 344–489 (YCNTIEGTAK…NEMVHNLVAI (146 aa)) is middle domain. The tract at residues 448-685 (NYSTQELLRF…NHVKDTLQSE (238 aa)) is interaction with GSK3B. The segment at 502–569 (ADACGLMNNN…IQDNRRETKN (68 aa)) is b domain. Positions 522 to 554 (RELPSAGSRDKSSKVPSALAPASQEPPPAASAE) are disordered. Position 529 is a phosphoserine (S529). Residues K532, K535, K558, and K568 each participate in a glycyl lysine isopeptide (Lys-Gly) (interchain with G-Cter in SUMO) cross-link. The C-terminal dimerization domain stretch occupies residues 542–736 (PASQEPPPAA…IAEIRETHLW (195 aa)). The segment at 566–588 (ETKNVPSAGGGIGDGGQEPTTGN) is disordered. O-linked (GlcNAc) threonine glycans are attached at residues T585 and T586. K594 is covalently cross-linked (Glycyl lysine isopeptide (Lys-Gly) (interchain with G-Cter in SUMO)). K597 is subject to N6-acetyllysine; alternate. K597 participates in a covalent cross-link: Glycyl lysine isopeptide (Lys-Gly) (interchain with G-Cter in SUMO); alternate. K606 participates in a covalent cross-link: Glycyl lysine isopeptide (Lys-Gly) (interchain with G-Cter in SUMO). S607 is subject to Phosphoserine. K608 is covalently cross-linked (Glycyl lysine isopeptide (Lys-Gly) (interchain with G-Cter in SUMO)). The residue at position 616 (S616) is a Phosphoserine; by PINK1. S637 carries the phosphoserine; by CAMK1 and PKA modification. C644 bears the S-nitrosocysteine mark. Positions 644 to 735 (CEVIERLIKS…IIAEIRETHL (92 aa)) constitute a GED domain. The tract at residues 654–668 (YFLIVRKNIQDSVPK) is important for homodimerization.

The protein belongs to the TRAFAC class dynamin-like GTPase superfamily. Dynamin/Fzo/YdjA family. As to quaternary structure, homotetramer; dimerizes through the N-terminal GTP-middle region of one molecule binding to the GED domain of another DNM1L molecule. Oligomerizes in a GTP-dependent manner to form membrane-associated tubules with a spiral pattern. Interacts with GSK3B and MARCHF5. Interacts (via the GTPase and B domains) with UBE2I; the interaction promotes sumoylation of DNM1L, mainly in its B domain. Interacts with PPP3CA; the interaction dephosphorylates DNM1L and regulates its transition to mitochondria. Interacts with BCL2L1 isoform BCL-X(L) and CLTA; DNM1L and BCL2L1 isoform BCL-X(L) may form a complex in synaptic vesicles that also contains clathrin and MFF. Interacts with MFF; the interaction is inhibited by C11orf65/MFI. Interacts with FIS1. Interacts with MIEF2 and MIEF1; GTP-dependent, regulates GTP hydrolysis and DNM1L oligomerization. Interacts with PGAM5; this interaction leads to dephosphorylation at Ser-656 and activation of GTPase activity and eventually to mitochondria fragmentation. Interacts with RALBP1; during mitosis, recruits DNM1L to the mitochondrion and mediates its activation by the mitotic kinase cyclin B-CDK1. Interacts with FUNDC1; this interaction recruits DNM1L/DRP1 at ER-mitochondria contact sites. Post-translationally, phosphorylation/dephosphorylation events on two sites near the GED domain regulate mitochondrial fission. Phosphorylation on Ser-637 inhibits mitochondrial fission probably through preventing intramolecular interaction. Dephosphorylated on this site by PPP3CA which promotes mitochondrial fission. Phosphorylation on Ser-616 by Pink1 activates the GTPase activity and promotes mitochondrial fission. Phosphorylated in a circadian manner at Ser-637. Dephosphorylated by PGAM5. Sumoylated on various lysine residues within the B domain, probably by MUL1. Sumoylation positively regulates mitochondrial fission. Desumoylated by SENP5 during G2/M transition of mitosis. Appears to be linked to its catalytic activity. In terms of processing, S-nitrosylation increases DNM1L dimerization, mitochondrial fission and causes neuronal damage. Post-translationally, O-GlcNAcylation augments the level of the GTP-bound active form of DNM1L and induces translocation from the cytoplasm to mitochondria in cardiomyocytes. It also decreases phosphorylation at Ser-637. Ubiquitination by MARCHF5 affects mitochondrial morphology. As to expression, expressed in the cerebellum and in several regions of the cerebrum and diencephalon. Strongly expressed in the cerebellar Purkinje cells and in the pontile giant neurons. Widely expressed. In terms of tissue distribution, brain-specific. As to expression, brain-specific (at protein level). Expressed in most of the subregions of the brain, including the cerebellum, midbrain, hippocampus, striatum, cerebral cortex, and brain stem. Weakly expressed in the olfactory bulb.

It is found in the cytoplasm. It localises to the cytosol. The protein resides in the golgi apparatus. The protein localises to the endomembrane system. Its subcellular location is the mitochondrion outer membrane. It is found in the peroxisome. It localises to the membrane. The protein resides in the clathrin-coated pit. The protein localises to the cytoplasmic vesicle. Its subcellular location is the secretory vesicle. It is found in the synaptic vesicle membrane. It localises to the lysosome. The protein resides in the late endosome. The protein localises to the cell membrane. Its subcellular location is the postsynaptic density. It catalyses the reaction GTP + H2O = GDP + phosphate + H(+). In terms of biological role, functions in mitochondrial and peroxisomal division. Mediates membrane fission through oligomerization into membrane-associated tubular structures that wrap around the scission site to constrict and sever the mitochondrial membrane through a GTP hydrolysis-dependent mechanism. The specific recruitment at scission sites is mediated by membrane receptors like MFF, MIEF1 and MIEF2 for mitochondrial membranes. While the recruitment by the membrane receptors is GTP-dependent, the following hydrolysis of GTP induces the dissociation from the receptors and allows DNM1L filaments to curl into closed rings that are probably sufficient to sever a double membrane. Acts downstream of PINK1 to promote mitochondrial fission in a PRKN-dependent manner. Plays an important role in mitochondrial fission during mitosis. Required for formation of endocytic vesicles. Through its function in mitochondrial division, ensures the survival of at least some types of postmitotic neurons, including Purkinje cells, by suppressing oxidative damage. Required for normal brain development, including that of cerebellum. Facilitates developmentally regulated apoptosis during neural tube formation. Required for a normal rate of cytochrome c release and caspase activation during apoptosis; this requirement may depend upon the cell type and the physiological apoptotic cues. Proposed to regulate synaptic vesicle membrane dynamics through association with BCL2L1 isoform Bcl-X(L) which stimulates its GTPase activity in synaptic vesicles; the function may require its recruitment by MFF to clathrin-containing vesicles. Required for programmed necrosis execution. Rhythmic control of its activity following phosphorylation at Ser-637 is essential for the circadian control of mitochondrial ATP production. Functionally, regulates postsynaptic clathrin-mediated endocytosis by positioning the endocytic zone at the postsynaptic density, independently of mitochondrial division. In Mus musculus (Mouse), this protein is Dynamin-1-like protein.